Consider the following 259-residue polypeptide: Phosphatidylglycerol--prolipoprotein diacylglyceryl transferase (259 aa).

The next 4 helical transmembrane spans lie at isoleucine 10 to tyrosine 30, isoleucine 50 to tyrosine 70, tryptophan 86 to phenylalanine 106, and isoleucine 112 to glycine 132. Residue arginine 133 coordinates a 1,2-diacyl-sn-glycero-3-phospho-(1'-sn-glycerol). 3 helical membrane-spanning segments follow: residues leucine 169–phenylalanine 189, glycine 197–valine 217, and isoleucine 227–isoleucine 247.

It belongs to the Lgt family.

The protein resides in the cell inner membrane. The catalysed reaction is L-cysteinyl-[prolipoprotein] + a 1,2-diacyl-sn-glycero-3-phospho-(1'-sn-glycerol) = an S-1,2-diacyl-sn-glyceryl-L-cysteinyl-[prolipoprotein] + sn-glycerol 1-phosphate + H(+). It participates in protein modification; lipoprotein biosynthesis (diacylglyceryl transfer). Its function is as follows. Catalyzes the transfer of the diacylglyceryl group from phosphatidylglycerol to the sulfhydryl group of the N-terminal cysteine of a prolipoprotein, the first step in the formation of mature lipoproteins. This Ehrlichia ruminantium (strain Gardel) protein is Phosphatidylglycerol--prolipoprotein diacylglyceryl transferase.